Reading from the N-terminus, the 251-residue chain is Tryptophan synthase alpha chain (251 aa).

Catalysis depends on proton acceptor residues Glu46 and Asp57.

This sequence belongs to the TrpA family. As to quaternary structure, tetramer of two alpha and two beta chains.

The enzyme catalyses (1S,2R)-1-C-(indol-3-yl)glycerol 3-phosphate + L-serine = D-glyceraldehyde 3-phosphate + L-tryptophan + H2O. It functions in the pathway amino-acid biosynthesis; L-tryptophan biosynthesis; L-tryptophan from chorismate: step 5/5. The alpha subunit is responsible for the aldol cleavage of indoleglycerol phosphate to indole and glyceraldehyde 3-phosphate. This is Tryptophan synthase alpha chain from Karelsulcia muelleri (strain GWSS) (Sulcia muelleri).